The chain runs to 468 residues: Neurexin-1-beta (468 aa).

The first 46 residues, 1-46, serve as a signal peptide directing secretion; that stretch reads MYQRMLRCGAELGSPGGGSSGGAGGRLALLWIVPLTLSGLLGVAWG. Topologically, residues 47-391 are extracellular; that stretch reads ASSLGAHHIH…AEVIRESSST (345 aa). The region spanning 87-285 is the Laminin G-like domain; the sequence is YIFSKGGGQI…DANIAIVGNV (199 aa). The Ca(2+) site is built by Asp137 and Val154. Asn184 carries an N-linked (GlcNAc...) asparagine glycan. Positions 201–230 are essential for interaction with CBLN1; modulates interaction affinity with NLGN1, NLGN2 and NLGN3; prevents interaction with DAG1/alpha-dystroglycan; modulates interaction with alpha-latrotoxin; the sequence is GNNDNERLAIARQRIPYRLGRVVDEWLLDK. Ile236 and Asn238 together coordinate Ca(2+). The O-linked (Xyl...) (heparan sulfate) serine glycan is linked to Ser346. The tract at residues 350-381 is disordered; the sequence is PSDDEDIDPCEPSSGGLANPTRVGGREPYPGS. A helical membrane pass occupies residues 392–414; the sequence is TGMVVGIVAAAALCILILLYAMY. The Cytoplasmic portion of the chain corresponds to 415–468; sequence KYRNRDEGSYHVDESRNYISNSAQSNGAVVKEKQPSSAKSANKNKKNKDKEYYV. The segment at 435–468 is disordered; the sequence is NSAQSNGAVVKEKQPSSAKSANKNKKNKDKEYYV. A phosphoserine mark is found at Ser450, Ser451, and Ser454.

The protein belongs to the neurexin family. In terms of assembly, the cytoplasmic C-terminal region binds to CASK. Binds NLGN1, NLGN2 and NLGN3, DAG1 (alpha-dystroglycan) and alpha-latrotoxin. Binding to neuroligins is calcium-dependent, and the binding preference ranks as follow: NLGN1 &gt; NLGN4 &gt;&gt; NLGN3 &gt; NLGN2. Interacts with CBLN2 and more weakly with CBLN4. Interacts with CBLN1; interaction is CBLN1 hexamer form-dependent; CBLN1-binding is calcium-independent; isoform 1b does not interact with CBLN1. Interacts with CLSTN3. Post-translationally, N-glycosylated. O-glycosylated; contains heparan sulfate. Heparan sulfate attachment is required for synapse development by mediating interactions with neuroligins. Brain.

It is found in the presynaptic cell membrane. In terms of biological role, neuronal cell surface protein involved in cell recognition and cell adhesion by forming intracellular junctions through binding to neuroligins. Plays a role in formation of synaptic junctions. Functions as part of a trans-synaptic complex by binding to cerebellins and postsynaptic GRID1. This interaction helps regulate the activity of NMDA and AMPA receptors at hippocampal synapses without affecting synapse formation. NRXN1B-CBLN2-GRID1 complex transduce presynaptic signals into postsynaptic NMDAR response. The protein is Neurexin-1-beta of Rattus norvegicus (Rat).